Consider the following 408-residue polypeptide: Dual-specificity RNA methyltransferase RlmN (408 aa).

Glutamate 126 acts as the Proton acceptor in catalysis. Positions 132-373 constitute a Radical SAM core domain; sequence EEGRGTLCLS…NQAGYASPIR (242 aa). A disulfide bridge connects residues cysteine 139 and cysteine 384. [4Fe-4S] cluster is bound by residues cysteine 146, cysteine 150, and cysteine 153. S-adenosyl-L-methionine is bound by residues 210-211, serine 242, 264-266, and asparagine 341; these read GE and SLH. Cysteine 384 serves as the catalytic S-methylcysteine intermediate.

This sequence belongs to the radical SAM superfamily. RlmN family. It depends on [4Fe-4S] cluster as a cofactor.

The protein resides in the cytoplasm. The enzyme catalyses adenosine(2503) in 23S rRNA + 2 reduced [2Fe-2S]-[ferredoxin] + 2 S-adenosyl-L-methionine = 2-methyladenosine(2503) in 23S rRNA + 5'-deoxyadenosine + L-methionine + 2 oxidized [2Fe-2S]-[ferredoxin] + S-adenosyl-L-homocysteine. It carries out the reaction adenosine(37) in tRNA + 2 reduced [2Fe-2S]-[ferredoxin] + 2 S-adenosyl-L-methionine = 2-methyladenosine(37) in tRNA + 5'-deoxyadenosine + L-methionine + 2 oxidized [2Fe-2S]-[ferredoxin] + S-adenosyl-L-homocysteine. Functionally, specifically methylates position 2 of adenine 2503 in 23S rRNA and position 2 of adenine 37 in tRNAs. m2A2503 modification seems to play a crucial role in the proofreading step occurring at the peptidyl transferase center and thus would serve to optimize ribosomal fidelity. In Bartonella tribocorum (strain CIP 105476 / IBS 506), this protein is Dual-specificity RNA methyltransferase RlmN.